Consider the following 600-residue polypeptide: NADH-quinone oxidoreductase subunit C/D (600 aa).

Positions 1–190 (MVNNMTDLTA…SPFELTKAKQ (190 aa)) are NADH dehydrogenase I subunit C. The NADH dehydrogenase I subunit D stretch occupies residues 214–600 (DFMFLNLGPN…IDFVMSDVDR (387 aa)).

This sequence in the N-terminal section; belongs to the complex I 30 kDa subunit family. The protein in the C-terminal section; belongs to the complex I 49 kDa subunit family. NDH-1 is composed of 13 different subunits. Subunits NuoB, CD, E, F, and G constitute the peripheral sector of the complex.

It localises to the cell inner membrane. It carries out the reaction a quinone + NADH + 5 H(+)(in) = a quinol + NAD(+) + 4 H(+)(out). In terms of biological role, NDH-1 shuttles electrons from NADH, via FMN and iron-sulfur (Fe-S) centers, to quinones in the respiratory chain. The immediate electron acceptor for the enzyme in this species is believed to be ubiquinone. Couples the redox reaction to proton translocation (for every two electrons transferred, four hydrogen ions are translocated across the cytoplasmic membrane), and thus conserves the redox energy in a proton gradient. The chain is NADH-quinone oxidoreductase subunit C/D from Escherichia coli O157:H7.